We begin with the raw amino-acid sequence, 266 residues long: 4-hydroxy-tetrahydrodipicolinate reductase (266 aa).

10–15 (GPRGRM) is a binding site for NAD(+). Residue Lys38 participates in NADP(+) binding. Residues 99 to 101 (GTT) and 125 to 128 (APNF) each bind NAD(+). His155 acts as the Proton donor/acceptor in catalysis. His156 provides a ligand contact to (S)-2,3,4,5-tetrahydrodipicolinate. Lys159 serves as the catalytic Proton donor. 165-166 (GT) contributes to the (S)-2,3,4,5-tetrahydrodipicolinate binding site.

It belongs to the DapB family.

The protein resides in the cytoplasm. It catalyses the reaction (S)-2,3,4,5-tetrahydrodipicolinate + NAD(+) + H2O = (2S,4S)-4-hydroxy-2,3,4,5-tetrahydrodipicolinate + NADH + H(+). It carries out the reaction (S)-2,3,4,5-tetrahydrodipicolinate + NADP(+) + H2O = (2S,4S)-4-hydroxy-2,3,4,5-tetrahydrodipicolinate + NADPH + H(+). It participates in amino-acid biosynthesis; L-lysine biosynthesis via DAP pathway; (S)-tetrahydrodipicolinate from L-aspartate: step 4/4. Its function is as follows. Catalyzes the conversion of 4-hydroxy-tetrahydrodipicolinate (HTPA) to tetrahydrodipicolinate. This Bacillus cytotoxicus (strain DSM 22905 / CIP 110041 / 391-98 / NVH 391-98) protein is 4-hydroxy-tetrahydrodipicolinate reductase.